We begin with the raw amino-acid sequence, 462 residues long: Keratin, type I cytoskeletal 28 (462 aa).

A disordered region spans residues 1-26 (MSLRFSGGSRHVGIQSGSLRPPSGGA). The tract at residues 1-83 (MSLRFSGGSR…GSEGGLLSGN (83 aa)) is head. The coil 1A stretch occupies residues 84-119 (EKVTMQNLNNRLASYLDNVKALEEANSELERKIKTW). Residues 84 to 399 (EKVTMQNLNN…RLIDGDENSC (316 aa)) enclose the IF rod domain. A linker 1 region spans residues 120–141 (HEKYGPGSCRGLDRDYSKYHLT). The tract at residues 142–233 (IEDLKSKIIS…KNHEEEMKVL (92 aa)) is coil 1B. A linker 12 region spans residues 234–256 (QCAAGGNVNVEMNAAPGVDLTVL). The segment at 257 to 395 (LNNMRAEYEA…ETYCRLIDGD (139 aa)) is coil 2. A tail region spans residues 396–462 (ENSCSVSKGF…NGKAEQRVPF (67 aa)).

The protein belongs to the intermediate filament family. Heterotetramer of two type I and two type II keratins. As to expression, in the hair follicle and bulb, uniformly expressed in all three layers of the inner root sheath (the Henle layer, the Huxley layer and the cuticle) and observed in matrix cells (at protein level).

The protein resides in the cytoplasm. In terms of biological role, essential for the proper assembly of types I and II keratin protein complexes and the formation of keratin intermediate filaments in the inner root sheath (irs). This Mus musculus (Mouse) protein is Keratin, type I cytoskeletal 28.